A 304-amino-acid chain; its full sequence is Ribonuclease Z (304 aa).

Zn(2+)-binding residues include histidine 63, histidine 65, aspartate 67, histidine 68, histidine 141, aspartate 208, and histidine 266. The active-site Proton acceptor is aspartate 67.

Belongs to the RNase Z family. Homodimer. Zn(2+) serves as cofactor.

It catalyses the reaction Endonucleolytic cleavage of RNA, removing extra 3' nucleotides from tRNA precursor, generating 3' termini of tRNAs. A 3'-hydroxy group is left at the tRNA terminus and a 5'-phosphoryl group is left at the trailer molecule.. Its function is as follows. Zinc phosphodiesterase, which displays some tRNA 3'-processing endonuclease activity. Probably involved in tRNA maturation, by removing a 3'-trailer from precursor tRNA. This chain is Ribonuclease Z, found in Chlamydia trachomatis serovar L2 (strain ATCC VR-902B / DSM 19102 / 434/Bu).